The sequence spans 444 residues: UDP-N-acetylmuramate--L-alanine ligase (444 aa).

110–116 (GAHGKTS) is an ATP binding site.

It belongs to the MurCDEF family.

The protein localises to the cytoplasm. The catalysed reaction is UDP-N-acetyl-alpha-D-muramate + L-alanine + ATP = UDP-N-acetyl-alpha-D-muramoyl-L-alanine + ADP + phosphate + H(+). The protein operates within cell wall biogenesis; peptidoglycan biosynthesis. In terms of biological role, cell wall formation. The polypeptide is UDP-N-acetylmuramate--L-alanine ligase (Streptococcus pneumoniae (strain P1031)).